The primary structure comprises 443 residues: tRNA-2-methylthio-N(6)-dimethylallyladenosine synthase (443 aa).

The MTTase N-terminal domain occupies 12–126 (KTFRVKSFGC…LPEMVADAAA (115 aa)). The [4Fe-4S] cluster site is built by Cys21, Cys57, Cys89, Cys162, Cys166, and Cys169. The 233-residue stretch at 148 to 380 (RKSAPTAFLT…QAALNRDQLA (233 aa)) folds into the Radical SAM core domain. Residues 383–443 (KASVGKTCEV…GPNSISGRLA (61 aa)) enclose the TRAM domain.

This sequence belongs to the methylthiotransferase family. MiaB subfamily. Monomer. It depends on [4Fe-4S] cluster as a cofactor.

The protein resides in the cytoplasm. It carries out the reaction N(6)-dimethylallyladenosine(37) in tRNA + (sulfur carrier)-SH + AH2 + 2 S-adenosyl-L-methionine = 2-methylsulfanyl-N(6)-dimethylallyladenosine(37) in tRNA + (sulfur carrier)-H + 5'-deoxyadenosine + L-methionine + A + S-adenosyl-L-homocysteine + 2 H(+). In terms of biological role, catalyzes the methylthiolation of N6-(dimethylallyl)adenosine (i(6)A), leading to the formation of 2-methylthio-N6-(dimethylallyl)adenosine (ms(2)i(6)A) at position 37 in tRNAs that read codons beginning with uridine. The polypeptide is tRNA-2-methylthio-N(6)-dimethylallyladenosine synthase (Novosphingobium aromaticivorans (strain ATCC 700278 / DSM 12444 / CCUG 56034 / CIP 105152 / NBRC 16084 / F199)).